Consider the following 173-residue polypeptide: Adenine phosphoribosyltransferase (173 aa).

This sequence belongs to the purine/pyrimidine phosphoribosyltransferase family. Homodimer.

It localises to the cytoplasm. It carries out the reaction AMP + diphosphate = 5-phospho-alpha-D-ribose 1-diphosphate + adenine. It functions in the pathway purine metabolism; AMP biosynthesis via salvage pathway; AMP from adenine: step 1/1. In terms of biological role, catalyzes a salvage reaction resulting in the formation of AMP, that is energically less costly than de novo synthesis. This chain is Adenine phosphoribosyltransferase, found in Thermoanaerobacter sp. (strain X514).